The chain runs to 401 residues: Homocitrate synthase (401 aa).

Residues 22-271 (VRFCDTTLRD…KLPIDLDTTS (250 aa)) enclose the Pyruvate carboxyltransferase domain. The disordered stretch occupies residues 367-401 (TRHKRGLDSRDLPGTSRAGRDAGPRAGTPTREEPV).

This sequence belongs to the alpha-IPM synthase/homocitrate synthase family.

The enzyme catalyses acetyl-CoA + 2-oxoglutarate + H2O = (2R)-homocitrate + CoA + H(+). This protein is a Fe-Mo-cofactor biosynthetic component. This Frankia sp. (strain FaC1) protein is Homocitrate synthase (nifV).